We begin with the raw amino-acid sequence, 702 residues long: ATP-dependent zinc metalloprotease FtsH (702 aa).

At 1–26 the chain is on the cytoplasmic side; sequence MKKRNKGLVEQTTTEKNNFSRKTAWK. The chain crosses the membrane as a helical span at residues 27-47; the sequence is VFWWVIILAVVIGVLAYIFSP. Topologically, residues 48-175 are extracellular; the sequence is RAATAVVESW…FIAPDTRARD (128 aa). The helical transmembrane segment at 176-196 threads the bilayer; it reads VLNGLFGLLPIIIFVVFFLLF. At 197–702 the chain is on the cytoplasmic side; sequence WRSARGISAG…EVKPESETNS (506 aa). 271 to 278 contributes to the ATP binding site; that stretch reads GPPGTGKT. Zn(2+) is bound at residue histidine 493. Glutamate 494 is a catalytic residue. Histidine 497 and aspartate 572 together coordinate Zn(2+). Positions 682–702 are disordered; sequence EQQAKQKLNKSEVKPESETNS. Residues 690–702 show a composition bias toward basic and acidic residues; that stretch reads NKSEVKPESETNS.

It in the central section; belongs to the AAA ATPase family. The protein in the C-terminal section; belongs to the peptidase M41 family. Homohexamer. Zn(2+) serves as cofactor.

The protein localises to the cell membrane. Its function is as follows. Acts as a processive, ATP-dependent zinc metallopeptidase for both cytoplasmic and membrane proteins. Plays a role in the quality control of integral membrane proteins. The polypeptide is ATP-dependent zinc metalloprotease FtsH (Mycoplasma genitalium (strain ATCC 33530 / DSM 19775 / NCTC 10195 / G37) (Mycoplasmoides genitalium)).